A 624-amino-acid chain; its full sequence is MASTRRPFGPPHGAFDFRDMFFDSSKMEEIRNVQARSLGQMAPGQSRILKRNQTMDEKYLLPKEEALAGTGVRLSLRPPTISSKSRASEALRKLAQIETKILKRRQVPTAWSGMESDSTASERSLPQRTDTTSVSSQYPLRTFQKQVCKTSVVGDDGQSGKGSRFLKKKELPAEARSPVLAAETEKQVLLPTQREPARKYDAPDSDEEEMKVLLGSLMESSGEKERNGNQELPGTRSDLGKVFLDLTPDQPGVLCLLSADQSSLKSTSVSLRAQSLQTRSGGDPASLTTSPSILRDDFSRSASSKRECIKLASSPSRMETESSEEPVSEAAADSLHDFRINILSIDDLVLADGYKSDGEQKGVTTVVEDEEDLTTEHEISEHPGASSTAAVWSHSMSSARSMETPTALSVSPVYSEDFEQFSGPLALEESLDRTLDTLSKFSSGEQTDTVSRQPLSRTEWGRGVTRVVKETAVQTLDPAFAYQWTKAGGMAAIGPTLGGGYVDPVPIASHIISADAIEALTAYSPAVLALNDMLKQQLSLTQQFIEASHHLHHSLLRSLDEDSFHYHTLEEAKEYIRCHRPAPLTMEAALQEVRKELEVHLDINDSHVEASKAAALPAEPIDGL.

A disordered region spans residues 108 to 138; sequence PTAWSGMESDSTASERSLPQRTDTTSVSSQY. Ser112 is modified (phosphoserine). Polar residues predominate over residues 115–138; that stretch reads ESDSTASERSLPQRTDTTSVSSQY. Ser205 carries the phosphoserine modification. 2 disordered regions span residues 217 to 236 and 305 to 329; these read LMES…PGTR and KREC…PVSE.

This is an uncharacterized protein from Rattus norvegicus (Rat).